An 82-amino-acid polypeptide reads, in one-letter code: uncharacterized protein (82 aa).

A disordered region spans residues Tyr60–Thr82.

This is an uncharacterized protein from Saccharomyces cerevisiae (strain ATCC 204508 / S288c) (Baker's yeast).